The sequence spans 610 residues: Glutamine--fructose-6-phosphate aminotransferase [isomerizing] (610 aa).

Cys2 (nucleophile; for GATase activity) is an active-site residue. One can recognise a Glutamine amidotransferase type-2 domain in the interval 2–218; the sequence is CGIVGAVAQR…EGDVAEITRR (217 aa). 2 SIS domains span residues 286 to 426 and 459 to 600; these read AAEI…QQGR and LATD…VDQP. Lys605 serves as the catalytic For Fru-6P isomerization activity.

Homodimer.

It localises to the cytoplasm. The catalysed reaction is D-fructose 6-phosphate + L-glutamine = D-glucosamine 6-phosphate + L-glutamate. In terms of biological role, catalyzes the first step in hexosamine metabolism, converting fructose-6P into glucosamine-6P using glutamine as a nitrogen source. The sequence is that of Glutamine--fructose-6-phosphate aminotransferase [isomerizing] from Vibrio vulnificus (strain CMCP6).